We begin with the raw amino-acid sequence, 361 residues long: sn-glycerol-3-phosphate import ATP-binding protein UgpC (361 aa).

Positions 4–235 constitute an ABC transporter domain; it reads LSLKGVRKSY…PATVFVAGFI (232 aa). Position 37–44 (37–44) interacts with ATP; sequence GPSGCGKS.

This sequence belongs to the ABC transporter superfamily. sn-glycerol-3-phosphate importer (TC 3.A.1.1.3) family. As to quaternary structure, the complex is composed of two ATP-binding proteins (UgpC), two transmembrane proteins (UgpA and UgpE) and a solute-binding protein (UgpB).

It is found in the cell inner membrane. It carries out the reaction sn-glycerol 3-phosphate(out) + ATP + H2O = sn-glycerol 3-phosphate(in) + ADP + phosphate + H(+). Functionally, part of the ABC transporter complex UgpBAEC involved in sn-glycerol-3-phosphate (G3P) import. Responsible for energy coupling to the transport system. The protein is sn-glycerol-3-phosphate import ATP-binding protein UgpC of Burkholderia lata (strain ATCC 17760 / DSM 23089 / LMG 22485 / NCIMB 9086 / R18194 / 383).